A 145-amino-acid polypeptide reads, in one-letter code: MQEVELFTDGGCRGNPGPGGWGALLRFGGVEKELKGAELDTTNNRMELTAAIEGLKALKRPCKVTLTTDSQYVKNGITQWMTNWKKNNWKTAAKKPVKNKDLWQALDEALQPHDVTWAWVKGHSGHDENERVDELANQAMDELTG.

Residues Met1–Asp141 enclose the RNase H type-1 domain. Residues Asp9, Glu47, Asp69, and Asp133 each coordinate Mg(2+).

Belongs to the RNase H family. As to quaternary structure, monomer. Mg(2+) serves as cofactor.

The protein localises to the cytoplasm. It carries out the reaction Endonucleolytic cleavage to 5'-phosphomonoester.. Functionally, endonuclease that specifically degrades the RNA of RNA-DNA hybrids. The protein is Ribonuclease H of Hydrogenovibrio crunogenus (strain DSM 25203 / XCL-2) (Thiomicrospira crunogena).